The primary structure comprises 417 residues: Multifunctional CCA protein (417 aa).

Glycine 8 and arginine 11 together coordinate ATP. Positions 8 and 11 each coordinate CTP. Mg(2+)-binding residues include aspartate 21 and aspartate 23. ATP is bound by residues arginine 91, arginine 137, and arginine 140. 3 residues coordinate CTP: arginine 91, arginine 137, and arginine 140. The region spanning 225–326 is the HD domain; it reads SGIHTLMTLQ…LNVLKKTDAF (102 aa).

It belongs to the tRNA nucleotidyltransferase/poly(A) polymerase family. Bacterial CCA-adding enzyme type 1 subfamily. In terms of assembly, monomer. Can also form homodimers and oligomers. Requires Mg(2+) as cofactor. Ni(2+) serves as cofactor.

The enzyme catalyses a tRNA precursor + 2 CTP + ATP = a tRNA with a 3' CCA end + 3 diphosphate. It carries out the reaction a tRNA with a 3' CCA end + 2 CTP + ATP = a tRNA with a 3' CCACCA end + 3 diphosphate. Catalyzes the addition and repair of the essential 3'-terminal CCA sequence in tRNAs without using a nucleic acid template. Adds these three nucleotides in the order of C, C, and A to the tRNA nucleotide-73, using CTP and ATP as substrates and producing inorganic pyrophosphate. tRNA 3'-terminal CCA addition is required both for tRNA processing and repair. Also involved in tRNA surveillance by mediating tandem CCA addition to generate a CCACCA at the 3' terminus of unstable tRNAs. While stable tRNAs receive only 3'-terminal CCA, unstable tRNAs are marked with CCACCA and rapidly degraded. In Neisseria meningitidis serogroup B (strain ATCC BAA-335 / MC58), this protein is Multifunctional CCA protein.